Here is a 185-residue protein sequence, read N- to C-terminus: Elongation factor P (185 aa).

This sequence belongs to the elongation factor P family.

It is found in the cytoplasm. The protein operates within protein biosynthesis; polypeptide chain elongation. In terms of biological role, involved in peptide bond synthesis. Stimulates efficient translation and peptide-bond synthesis on native or reconstituted 70S ribosomes in vitro. Probably functions indirectly by altering the affinity of the ribosome for aminoacyl-tRNA, thus increasing their reactivity as acceptors for peptidyl transferase. The polypeptide is Elongation factor P (Nitratidesulfovibrio vulgaris (strain DP4) (Desulfovibrio vulgaris)).